The sequence spans 278 residues: HTH-type transcriptional regulator ExsA (278 aa).

An HTH araC/xylS-type domain is found at 171 to 269; that stretch reads ERLQLFMEKH…GCTPSRSRQG (99 aa). 2 consecutive DNA-binding regions (H-T-H motif) follow at residues 188 to 209 and 236 to 259; these read SDFS…GSVY and IVDI…RRRF.

In terms of assembly, homodimer. Interacts with ExsD; this interaction inhibits ExsA activity.

Its activity is regulated as follows. In the absence of inducing signals such as low Ca(2+) or host cell contact, the T3SS/injectisome is expressed at a low basal level and exists in a quiescent state due to ExsA sequestration by ExsD in a 1:1 complex. Upon host cell contact, this interaction is disrupted by the anti-antiactivator protein ExsC leading to ExsA activation. Its function is as follows. Transcriptional regulator that plays an essential role in the activation the type III secretion system (T3SS) operons. In addition, ExsA directly regulates the transcription of ImpA virulence factor that cooperatively inhibits the functions of host macrophages together with the T3SS. The sequence is that of HTH-type transcriptional regulator ExsA (exsA) from Pseudomonas aeruginosa (strain ATCC 15692 / DSM 22644 / CIP 104116 / JCM 14847 / LMG 12228 / 1C / PRS 101 / PAO1).